The sequence spans 195 residues: Small ribosomal subunit protein uS4 (195 aa).

Residues 109–183 form the S4 RNA-binding domain; that stretch reads RRLQTQVFKL…VKRKNLKKNQ (75 aa). Residues 165-195 are disordered; the sequence is PFGGGRPGRVKRKNLKKNQGGGGGAAEEEED.

This sequence belongs to the universal ribosomal protein uS4 family. As to quaternary structure, component of the small ribosomal subunit. Identified in a IGF2BP1-dependent mRNP granule complex containing untranslated mRNAs. Part of the small subunit (SSU) processome, composed of more than 70 proteins and the RNA chaperone small nucleolar RNA (snoRNA) U3.

It is found in the cytoplasm. The protein localises to the nucleus. It localises to the nucleolus. Its function is as follows. Component of the small ribosomal subunit. The ribosome is a large ribonucleoprotein complex responsible for the synthesis of proteins in the cell. Part of the small subunit (SSU) processome, first precursor of the small eukaryotic ribosomal subunit. During the assembly of the SSU processome in the nucleolus, many ribosome biogenesis factors, an RNA chaperone and ribosomal proteins associate with the nascent pre-rRNA and work in concert to generate RNA folding, modifications, rearrangements and cleavage as well as targeted degradation of pre-ribosomal RNA by the RNA exosome. The sequence is that of Small ribosomal subunit protein uS4 from Drosophila melanogaster (Fruit fly).